The following is a 328-amino-acid chain: NAD(P)H-dependent pentose reductase (328 aa).

The active-site Proton donor is tyrosine 50. Histidine 112 contacts substrate. NAD(+) is bound by residues 174 to 175 (AN), 223 to 232 (SSFGPQSFVE), and 279 to 289 (KSNNVDRLKQN).

It belongs to the aldo/keto reductase family.

Pentose reductase with a broad substrate affinity involved in pentose catabolism. Has highest reductase activities with L-arabinose and D-xylose as substrates, and displays much lower activities with D-ribose, D-galactose and D-glucose. Has highest dehydrogenase activity with L-arabitol as substrate, followed by xylitol and D-sorbitol. May be responsible for the first step of the L-arabinose catabolic pathway. This is NAD(P)H-dependent pentose reductase (PRD1) from Pyricularia oryzae (strain 70-15 / ATCC MYA-4617 / FGSC 8958) (Rice blast fungus).